The following is a 481-amino-acid chain: 4-hydroxyphenylacetate 3-monooxygenase oxygenase component (481 aa).

Residues 100 to 104 (RSPDY) and histidine 142 contribute to the substrate site. FAD-binding positions include 142-144 (HAL), 148-151 (QVNR), and threonine 185. 197–198 (ST) lines the substrate pocket. An FAD-binding site is contributed by 444–447 (DPVR).

It belongs to the FADH(2)-utilizing monooxygenase family. As to quaternary structure, homotetramer consisting of a dimer of dimers. 4-HPA 3-monooxygenase consists of a reductase component HpaC and an oxygenase component HpaB.

The enzyme catalyses 4-hydroxyphenylacetate + FADH2 + O2 = 3,4-dihydroxyphenylacetate + FAD + H2O + H(+). The protein operates within aromatic compound metabolism; 4-hydroxyphenylacetate degradation; pyruvate and succinate semialdehyde from 4-hydroxyphenylacetate: step 1/7. In terms of biological role, utilizes FADH(2) supplied by HpaC, to catalyze the hydroxylation of 4-hydroxyphenylacetic acid, leading to the production of 3,4-dihydroxyphenylacetic acid (DHPA). The polypeptide is 4-hydroxyphenylacetate 3-monooxygenase oxygenase component (Thermus thermophilus (strain ATCC 27634 / DSM 579 / HB8)).